Reading from the N-terminus, the 117-residue chain is Large ribosomal subunit protein uL18 (117 aa).

The protein belongs to the universal ribosomal protein uL18 family. In terms of assembly, part of the 50S ribosomal subunit; part of the 5S rRNA/L5/L18/L25 subcomplex. Contacts the 5S and 23S rRNAs.

In terms of biological role, this is one of the proteins that bind and probably mediate the attachment of the 5S RNA into the large ribosomal subunit, where it forms part of the central protuberance. This Phytoplasma mali (strain AT) protein is Large ribosomal subunit protein uL18.